We begin with the raw amino-acid sequence, 180 residues long: Cytokinin-beta-glucosidase 2 (180 aa).

Functionally, hydrolyzes cytokinin glucosides thus liberating free cytokinins. This chain is Cytokinin-beta-glucosidase 2 (ROLC2), found in Linaria vulgaris (Toadflax).